The following is a 121-amino-acid chain: Parathyroid hormone 4 (121 aa).

The signal sequence occupies residues 1–24 (MLKMQRSQQRVALMMLMVVAAVHC). A propeptide spanning residues 25–29 (QESES) is cleaved from the precursor. Positions 77–97 (RSRGAQLYSQPGREESSGGQK) are disordered.

It belongs to the parathyroid hormone family. In terms of tissue distribution, specifically expressed in a bilateral cluster of neurons in the dorsal region of the periventricular hypothalamus. Their axons project through the midbrain and hindbrain and down the spinal cord.

It is found in the secreted. In terms of biological role, neuroendocrine peptide which is produced by a subset of neurons in the hypothalamus. Activates the G-protein coupled receptors pth1ra, pth1rb and pth2r with similar affinity. Receptor binding stimulates intracellular cAMP production. Plays a role in bone mineralization by regulating expression of factors involved in phosphate homeostasis. Important for embryonic bone development. This chain is Parathyroid hormone 4, found in Danio rerio (Zebrafish).